The sequence spans 174 residues: MKKSIFSKKLLFSFGSLVALAAIPLITISCGQTNTDQSQQPGSGSGSGSGTSNGSGSTPTPEQGNNQGGSTPTPEQGNNQGGSTPTPEQGNNQGGSTPTPEQGNNQGGSTPTPEQGNNQGGSTPTPEQGNNQGGSTPTPEQGNNQGGSTPTPEQGNNQGGSTPTPEQGNSQVSK.

The signal sequence occupies residues 1 to 29 (MKKSIFSKKLLFSFGSLVALAAIPLITIS). Cysteine 30 carries N-palmitoyl cysteine lipidation. The S-diacylglycerol cysteine moiety is linked to residue cysteine 30. The tract at residues 32–174 (QTNTDQSQQP…PEQGNSQVSK (143 aa)) is disordered. Residues 43–53 (SGSGSGSGTSN) show a composition bias toward gly residues. 9 consecutive repeat copies span residues 55-67 (SGSTPTPEQGNNQ), 68-80 (GGSTPTPEQGNNQ), 81-93 (GGSTPTPEQGNNQ), 94-106 (GGSTPTPEQGNNQ), 107-119 (GGSTPTPEQGNNQ), 120-132 (GGSTPTPEQGNNQ), 133-145 (GGSTPTPEQGNNQ), 146-158 (GGSTPTPEQGNNQ), and 159-171 (GGSTPTPEQGNSQ). A 9 X 13 AA tandem repeats region spans residues 55–171 (SGSTPTPEQG…TPTPEQGNSQ (117 aa)). A compositionally biased stretch (polar residues) spans 62–174 (EQGNNQGGST…PEQGNSQVSK (113 aa)).

Its subcellular location is the cell membrane. Responsible for the antigenic diversity for host adaptation. Expression in E.coli of a construct containing vlpD, vlpE, and vlpF yields antigenically distinguishable products corresponding to each gene. In Mesomycoplasma hyorhinis (Mycoplasma hyorhinis), this protein is Variant surface antigen F (vlpF).